We begin with the raw amino-acid sequence, 337 residues long: Mortality factor related protein 1 (337 aa).

Positions 7–55 constitute a Tudor-knot domain; the sequence is FEVGENVACIYKGKPYDAKITDIKTNSDGKELYCVHFKGWNNRYDEKIP. The segment at 75–113 is disordered; the sequence is HNAELPTTALKPKKKSLAAEAPRDDRDDTPGTSKGKKAK. The MRG domain occupies 122–327; sequence TADDMKVELP…ASNDYYRRSL (206 aa).

As to quaternary structure, component of the SIN3S complex, which contains at least sin-3, hda-1, athp-1 and mrg-1. Interacts with cfp-1, a component of the SET2 complex. Interacts with rfp-1. Expressed in oocytes (at protein level). Expressed mainly in germ cells, but also at lower levels in several somatic cell types, including intestinal cells.

The protein resides in the nucleus. Its subcellular location is the chromosome. In terms of biological role, protein involved in the remodeling of chromatin thereby regulating various processes including transcription, chromosome synapsis and genome integrity. Mainly binds genomic loci carrying trimethylated histone H3 'Lys-36' (H3K36me3) or 'Lys-4' (H3K4me3), and acetylated histone H3 'Lys-9' (H3K9ac), 'Lys-27' (H3K27ac). During meiosis, required for the presynaptic pairing of homologous chromosomal regions outside of the pairing center and for the progression of chromosome synapsis. Essential maternal factor required in postembryonic germline development and in maintaining germ cell identity. Plays an important role in maintaining genomic integrity in primordial germ cells (PGCs) during meiosis by regulating DNA double-strand break (DSB) repair and synapsis. Also, required for chromatin-based transcriptional silencing in PGCs and for silencing of X-linked genes in the maternal germ line. By retaining histone acetyltransferase, cbp-1, in euchromatin, promotes the anchoring of heterochromatin at the inner nuclear membrane in intestinal and hypodermal cells. The polypeptide is Mortality factor related protein 1 (Caenorhabditis elegans).